The sequence spans 132 residues: Small ribosomal subunit protein uS11 (132 aa).

Residues 1–16 (MAAGMKGKRSRRRKER) show a composition bias toward basic residues. The disordered stretch occupies residues 1 to 20 (MAAGMKGKRSRRRKERKNVE).

Belongs to the universal ribosomal protein uS11 family. Part of the 30S ribosomal subunit. Interacts with proteins S7 and S18. Binds to IF-3.

In terms of biological role, located on the platform of the 30S subunit, it bridges several disparate RNA helices of the 16S rRNA. Forms part of the Shine-Dalgarno cleft in the 70S ribosome. The chain is Small ribosomal subunit protein uS11 from Clostridium botulinum (strain Kyoto / Type A2).